The primary structure comprises 548 residues: Chaperonin GroEL (548 aa).

ATP contacts are provided by residues Thr-30–Pro-33, Lys-51, Asp-87–Thr-91, Gly-415, and Asp-496. The interval Ser-527–Phe-548 is disordered. Residues Gly-538–Phe-548 show a composition bias toward gly residues.

Belongs to the chaperonin (HSP60) family. Forms a cylinder of 14 subunits composed of two heptameric rings stacked back-to-back. Interacts with the co-chaperonin GroES.

It localises to the cytoplasm. The catalysed reaction is ATP + H2O + a folded polypeptide = ADP + phosphate + an unfolded polypeptide.. Its function is as follows. Together with its co-chaperonin GroES, plays an essential role in assisting protein folding. The GroEL-GroES system forms a nano-cage that allows encapsulation of the non-native substrate proteins and provides a physical environment optimized to promote and accelerate protein folding. This chain is Chaperonin GroEL, found in Rickettsia akari (strain Hartford).